We begin with the raw amino-acid sequence, 45 residues long: Cytochrome b559 subunit beta (45 aa).

A helical transmembrane segment spans residues 20-36 (WLAVHTLGVPTVFFLGA). Residue histidine 24 participates in heme binding.

It belongs to the PsbE/PsbF family. As to quaternary structure, heterodimer of an alpha subunit and a beta subunit. PSII is composed of 1 copy each of membrane proteins PsbA, PsbB, PsbC, PsbD, PsbE, PsbF, PsbH, PsbI, PsbJ, PsbK, PsbL, PsbM, PsbT, PsbX, PsbY, PsbZ, Psb30/Ycf12, peripheral proteins PsbO, CyanoQ (PsbQ), PsbU, PsbV and a large number of cofactors. It forms dimeric complexes. The cofactor is heme b.

It localises to the cellular thylakoid membrane. Functionally, this b-type cytochrome is tightly associated with the reaction center of photosystem II (PSII). PSII is a light-driven water:plastoquinone oxidoreductase that uses light energy to abstract electrons from H(2)O, generating O(2) and a proton gradient subsequently used for ATP formation. It consists of a core antenna complex that captures photons, and an electron transfer chain that converts photonic excitation into a charge separation. The polypeptide is Cytochrome b559 subunit beta (Nostoc punctiforme (strain ATCC 29133 / PCC 73102)).